We begin with the raw amino-acid sequence, 1447 residues long: DNA topoisomerase 2 (1447 aa).

Residues N72, N101, 129 to 131 (SSN), and 142 to 149 (GRNGYGAK) contribute to the ATP site. The segment at 323–325 (KKK) is interaction with DNA. An ATP-binding site is contributed by 357-359 (QTK). The region spanning 435 to 552 (CTLILTEGDS…ELLRLPFLEE (118 aa)) is the Toprim domain. E441, D521, and D523 together coordinate Mg(2+). Residues 695–1169 (IPSLVDGLKP…TPEMLWLDDL (475 aa)) enclose the Topo IIA-type catalytic domain. Y785 functions as the O-(5'-phospho-DNA)-tyrosine intermediate in the catalytic mechanism. Positions 972-981 (KLTTTLSTNQ) are interaction with DNA. Disordered stretches follow at residues 1079–1110 (EDAEQADEEDEEEEEAAPSVSSKAKKEKEVDP), 1183–1231 (ERAE…DGEP), and 1246–1447 (AAAK…DFNC). The span at 1081–1094 (AEQADEEDEEEEEA) shows a compositional bias: acidic residues. Positions 1255-1281 (KEPKKPKEPKEPKVKKEPKGKQIKAEP) are enriched in basic and acidic residues. Residues 1283–1293 (ASGDEVDEFDA) are compositionally biased toward acidic residues. S1284 is subject to Phosphoserine. 2 stretches are compositionally biased toward basic and acidic residues: residues 1310–1325 (VKKEPGEKKPRQKKEN) and 1332–1359 (SKIDFSKAKAKKSDDDVEEVTPRAERPG). A Phosphoserine modification is found at S1344. T1352 is subject to Phosphothreonine. 4 positions are modified to phosphoserine: S1374, S1385, S1392, and S1396. Acidic residues predominate over residues 1374–1394 (SDEEEDGGNVGSDDDGNASDD). Basic and acidic residues predominate over residues 1395–1408 (DSPKRPAKRGREDE). Residues 1413-1423 (AKKKAPPKKRR) show a composition bias toward basic residues. Over residues 1427-1447 (ESDDDDIEIDEDDDDDSDFNC) the composition is skewed to acidic residues.

Belongs to the type II topoisomerase family. As to quaternary structure, homodimer. Interacts with mod(mdg4). Interacts with barr. Interacts with ph-p. Interacts with mle; the interaction mediates association with the MSL dosage compensation complex. It depends on Mg(2+) as a cofactor. The cofactor is Mn(2+). Requires Ca(2+) as cofactor. Post-translationally, phosphorylated. Phosphorylation by casein kinase II enhances ATPase activity.

It is found in the nucleus. It localises to the chromosome. The protein localises to the cytoplasm. It carries out the reaction ATP-dependent breakage, passage and rejoining of double-stranded DNA.. In terms of biological role, control of topological states of DNA by transient breakage and subsequent rejoining of DNA strands. Topoisomerase II makes double-strand breaks. Essential during mitosis and meiosis for proper segregation of daughter chromosomes. During meiosis, it disrupts heterochromatic connections between achiasmate and chiasmate homologs after spindle assembly so that chromosomes can separate at prometaphase I. During mitosis, it functions in the separation of sister chromatids by establishing amphitelic kinetochore attachments in mitotic spindles. May have a role in chromatin condensation and chromosome structure. May be involved in X-chromosome dosage compensation, perhaps by modifying the topological state of compensated genes. Regulates activity of the gypsy chromatin insulator complex by binding to mod(mdg4) and preventing its degradation. The sequence is that of DNA topoisomerase 2 from Drosophila melanogaster (Fruit fly).